The primary structure comprises 378 residues: DNA primase small subunit PriS (378 aa).

Catalysis depends on residues Asp98, Asp100, and Asp282.

This sequence belongs to the eukaryotic-type primase small subunit family. In terms of assembly, heterodimer of a small subunit (PriS) and a large subunit (PriL). It depends on Mg(2+) as a cofactor. The cofactor is Mn(2+).

In terms of biological role, catalytic subunit of DNA primase, an RNA polymerase that catalyzes the synthesis of short RNA molecules used as primers for DNA polymerase during DNA replication. The small subunit contains the primase catalytic core and has DNA synthesis activity on its own. Binding to the large subunit stabilizes and modulates the activity, increasing the rate of DNA synthesis while decreasing the length of the DNA fragments, and conferring RNA synthesis capability. The DNA polymerase activity may enable DNA primase to also catalyze primer extension after primer synthesis. May also play a role in DNA repair. This chain is DNA primase small subunit PriS, found in Methanosphaerula palustris (strain ATCC BAA-1556 / DSM 19958 / E1-9c).